Here is a 464-residue protein sequence, read N- to C-terminus: Chitobiosyldiphosphodolichol beta-mannosyltransferase (464 aa).

The Lumenal portion of the chain corresponds to 1-2 (MA). A helical membrane pass occupies residues 3-23 (ASCLVLLALCLLLPLLLLGGW). The Cytoplasmic segment spans residues 24–99 (KRWRRGRTAR…ELQSLAVGPR (76 aa)). The helical intramembrane region spans 100 to 120 (VFQYGVKVVFQAMYLLWKLMW). Residues 121–464 (REPGAYIFLQ…QTVLPLVMDT (344 aa)) are Cytoplasmic-facing. S242 is modified (phosphoserine). The segment at 242 to 261 (SPFRARSEPEDPATERSAFT) is disordered.

This sequence belongs to the glycosyltransferase group 1 family. Glycosyltransferase 33 subfamily.

The protein localises to the endoplasmic reticulum membrane. It carries out the reaction an N,N'-diacetylchitobiosyl-diphospho-di-trans,poly-cis-dolichol + GDP-alpha-D-mannose = a beta-D-Man-(1-&gt;4)-beta-D-GlcNAc-(1-&gt;4)-alpha-D-GlcNAc-diphospho-di-trans,poly-cis-dolichol + GDP + H(+). Its pathway is protein modification; protein glycosylation. Its function is as follows. Mannosyltransferase that operates in the biosynthetic pathway of dolichol-linked oligosaccharides, the glycan precursors employed in protein asparagine (N)-glycosylation. The assembly of dolichol-linked oligosaccharides begins on the cytosolic side of the endoplasmic reticulum membrane and finishes in its lumen. The sequential addition of sugars to dolichol pyrophosphate produces dolichol-linked oligosaccharides containing fourteen sugars, including two GlcNAcs, nine mannoses and three glucoses. Once assembled, the oligosaccharide is transferred from the lipid to nascent proteins by oligosaccharyltransferases. Catalyzes, on the cytoplasmic face of the endoplasmic reticulum, the addition of the first mannose residues to the dolichol-linked oligosaccharide chain, to produce Man1GlcNAc(2)-PP-dolichol core oligosaccharide. Man1GlcNAc(2)-PP-dolichol is a substrate for ALG2, the following enzyme in the biosynthetic pathway. The chain is Chitobiosyldiphosphodolichol beta-mannosyltransferase from Pongo abelii (Sumatran orangutan).